The sequence spans 226 residues: UPF0111 protein AF_1799 (226 aa).

This sequence belongs to the UPF0111 family.

This Archaeoglobus fulgidus (strain ATCC 49558 / DSM 4304 / JCM 9628 / NBRC 100126 / VC-16) protein is UPF0111 protein AF_1799.